The primary structure comprises 303 residues: Probable 5-dehydro-4-deoxyglucarate dehydratase (303 aa).

The protein belongs to the DapA family.

The enzyme catalyses 5-dehydro-4-deoxy-D-glucarate + H(+) = 2,5-dioxopentanoate + CO2 + H2O. It participates in carbohydrate acid metabolism; D-glucarate degradation; 2,5-dioxopentanoate from D-glucarate: step 2/2. The polypeptide is Probable 5-dehydro-4-deoxyglucarate dehydratase (Pseudomonas fluorescens (strain Pf0-1)).